The chain runs to 96 residues: UPF0235 protein YggU (96 aa).

It belongs to the UPF0235 family.

This is UPF0235 protein YggU from Salmonella agona (strain SL483).